The following is a 199-amino-acid chain: MSSVPVIPQARGLRHTGPVTVAVVSGPTAVGKGTVVGALLRSHPEIVVSRSVTTRPPRPTERDGIDYDFITPEQFDKLVDGEGLLEWATVHNSHRYGTPRGPVERAVADNRTVVLEIDLQGARQVRETYPQATQIFLAPPSWEELVHRLIGRGTETPEQQKQRLETAKVELANADEFDAVVVNDTVDHAVAHLVELLSL.

The Guanylate kinase-like domain occupies 19 to 198; it reads VTVAVVSGPT…AVAHLVELLS (180 aa). Residue 26–33 participates in ATP binding; sequence GPTAVGKG.

The protein belongs to the guanylate kinase family.

It localises to the cytoplasm. The enzyme catalyses GMP + ATP = GDP + ADP. In terms of biological role, essential for recycling GMP and indirectly, cGMP. The sequence is that of Guanylate kinase from Cutibacterium acnes (strain DSM 16379 / KPA171202) (Propionibacterium acnes).